A 490-amino-acid chain; its full sequence is Putative alanine aminotransferase (490 aa).

Positions 157, 158, 183, 239, and 308 each coordinate pyridoxal 5'-phosphate. The residue at position 311 (Lys311) is an N6-(pyridoxal phosphate)lysine. Arg320 lines the pyridoxal 5'-phosphate pocket.

This sequence belongs to the class-I pyridoxal-phosphate-dependent aminotransferase family. Alanine aminotransferase subfamily. As to quaternary structure, homodimer. Pyridoxal 5'-phosphate serves as cofactor.

The protein localises to the cytoplasm. It is found in the mitochondrion. The enzyme catalyses L-alanine + 2-oxoglutarate = pyruvate + L-glutamate. The protein operates within amino-acid degradation; L-alanine degradation via transaminase pathway; pyruvate from L-alanine: step 1/1. In terms of biological role, alanine aminotransferase involved in both alanine biosynthesis and utilization. This is Putative alanine aminotransferase (alt1) from Schizosaccharomyces pombe (strain 972 / ATCC 24843) (Fission yeast).